The chain runs to 121 residues: Holin-like protein CidA (121 aa).

Transmembrane regions (helical) follow at residues 27–47, 58–78, and 89–109; these read VHLP…SLKF, GADF…VAVI, and IDLI…TGIL.

The protein belongs to the CidA/LrgA family. CidA subfamily.

The protein resides in the cell membrane. Increases the activity of extracellular murein hydrolases possibly by mediating their export via hole formation. Inhibited by the antiholin-like proteins LrgAB. In an unstressed cell, the LrgAB products probably inhibit the function of the CidA protein. When a cell is stressed by the addition of antibiotics or by other factors in the environment, CidA possibly oligomerizes within the bacterial cell membrane, creating lesions that disrupt the proton motive force, which in turn results in loss of cell viability. These lesions are also hypothesized to regulate the subsequent cell lysis by either allowing the murein hydrolases access to the cell wall substrate and/or regulating their activity by a possible change in the cell wall pH that results from loss of membrane potential. In Bacillus cytotoxicus (strain DSM 22905 / CIP 110041 / 391-98 / NVH 391-98), this protein is Holin-like protein CidA.